A 170-amino-acid polypeptide reads, in one-letter code: ATP synthase subunit b (170 aa).

The chain crosses the membrane as a helical span at residues I3 to T23.

The protein belongs to the ATPase B chain family. In terms of assembly, F-type ATPases have 2 components, F(1) - the catalytic core - and F(0) - the membrane proton channel. F(1) has five subunits: alpha(3), beta(3), gamma(1), delta(1), epsilon(1). F(0) has three main subunits: a(1), b(2) and c(10-14). The alpha and beta chains form an alternating ring which encloses part of the gamma chain. F(1) is attached to F(0) by a central stalk formed by the gamma and epsilon chains, while a peripheral stalk is formed by the delta and b chains.

Its subcellular location is the cell inner membrane. In terms of biological role, f(1)F(0) ATP synthase produces ATP from ADP in the presence of a proton or sodium gradient. F-type ATPases consist of two structural domains, F(1) containing the extramembraneous catalytic core and F(0) containing the membrane proton channel, linked together by a central stalk and a peripheral stalk. During catalysis, ATP synthesis in the catalytic domain of F(1) is coupled via a rotary mechanism of the central stalk subunits to proton translocation. Component of the F(0) channel, it forms part of the peripheral stalk, linking F(1) to F(0). The sequence is that of ATP synthase subunit b from Campylobacter concisus (strain 13826).